The sequence spans 164 residues: NADH-quinone oxidoreductase subunit C (164 aa).

This sequence belongs to the complex I 30 kDa subunit family. NDH-1 is composed of 14 different subunits. Subunits NuoB, C, D, E, F, and G constitute the peripheral sector of the complex.

The protein resides in the cell inner membrane. It catalyses the reaction a quinone + NADH + 5 H(+)(in) = a quinol + NAD(+) + 4 H(+)(out). In terms of biological role, NDH-1 shuttles electrons from NADH, via FMN and iron-sulfur (Fe-S) centers, to quinones in the respiratory chain. The immediate electron acceptor for the enzyme in this species is believed to be ubiquinone. Couples the redox reaction to proton translocation (for every two electrons transferred, four hydrogen ions are translocated across the cytoplasmic membrane), and thus conserves the redox energy in a proton gradient. This chain is NADH-quinone oxidoreductase subunit C, found in Geotalea uraniireducens (strain Rf4) (Geobacter uraniireducens).